A 169-amino-acid polypeptide reads, in one-letter code: Major pepsin inhibitor 3 (169 aa).

Residues 1 to 20 (MHVWLILSLASLWTSSIAYS) form the signal peptide. Glutamine 21 carries the post-translational modification Pyrrolidone carboxylic acid. Cystine bridges form between cysteine 33–cysteine 79, cysteine 68–cysteine 86, and cysteine 99–cysteine 166. The tract at residues 135–169 (EEQQENQPPSSGMPHGAVPAGGLSPPPPPSFCTVQ) is disordered. Over residues 158 to 169 (SPPPPPSFCTVQ) the composition is skewed to pro residues.

Belongs to the protease inhibitor I33 family. As to expression, body wall.

It localises to the secreted. Functionally, this is an inhibitor of the aspartic protease pepsin. The sequence is that of Major pepsin inhibitor 3 from Ascaris suum (Pig roundworm).